Consider the following 232-residue polypeptide: Ubiquinone biosynthesis O-methyltransferase (232 aa).

S-adenosyl-L-methionine contacts are provided by R36, G55, D76, and L120.

Belongs to the methyltransferase superfamily. UbiG/COQ3 family.

The catalysed reaction is a 3-demethylubiquinol + S-adenosyl-L-methionine = a ubiquinol + S-adenosyl-L-homocysteine + H(+). It carries out the reaction a 3-(all-trans-polyprenyl)benzene-1,2-diol + S-adenosyl-L-methionine = a 2-methoxy-6-(all-trans-polyprenyl)phenol + S-adenosyl-L-homocysteine + H(+). The protein operates within cofactor biosynthesis; ubiquinone biosynthesis. Functionally, O-methyltransferase that catalyzes the 2 O-methylation steps in the ubiquinone biosynthetic pathway. The polypeptide is Ubiquinone biosynthesis O-methyltransferase (Stutzerimonas stutzeri (strain A1501) (Pseudomonas stutzeri)).